The primary structure comprises 299 residues: Probable lipid kinase YegS-like (299 aa).

One can recognise a DAGKc domain in the interval 2–133 (ATFPASLLIL…IDIAQVNDKT (132 aa)). ATP is bound by residues Thr40, 66–72 (GDGTINE), and Thr95. The Mg(2+) site is built by Leu215, Asp218, and Leu220. Glu271 acts as the Proton acceptor in catalysis.

The protein belongs to the diacylglycerol/lipid kinase family. YegS lipid kinase subfamily. Requires Mg(2+) as cofactor. The cofactor is Ca(2+).

It localises to the cytoplasm. Its function is as follows. Probably phosphorylates lipids; the in vivo substrate is unknown. In Citrobacter koseri (strain ATCC BAA-895 / CDC 4225-83 / SGSC4696), this protein is Probable lipid kinase YegS-like.